The sequence spans 175 residues: Protein LpfE (175 aa).

Positions 1–20 (MKNLHALMPACLLLTASAMA) are cleaved as a signal peptide.

Belongs to the fimbrial protein family.

The protein resides in the fimbrium. The sequence is that of Protein LpfE (lpfE) from Salmonella typhimurium (strain LT2 / SGSC1412 / ATCC 700720).